A 433-amino-acid polypeptide reads, in one-letter code: tRNA(Ile)-lysidine synthase (433 aa).

Residue 37–42 participates in ATP binding; the sequence is SGGKDS.

This sequence belongs to the tRNA(Ile)-lysidine synthase family.

It localises to the cytoplasm. It catalyses the reaction cytidine(34) in tRNA(Ile2) + L-lysine + ATP = lysidine(34) in tRNA(Ile2) + AMP + diphosphate + H(+). Ligates lysine onto the cytidine present at position 34 of the AUA codon-specific tRNA(Ile) that contains the anticodon CAU, in an ATP-dependent manner. Cytidine is converted to lysidine, thus changing the amino acid specificity of the tRNA from methionine to isoleucine. In Leptospira interrogans serogroup Icterohaemorrhagiae serovar Lai (strain 56601), this protein is tRNA(Ile)-lysidine synthase.